The following is a 195-amino-acid chain: Peptidyl-tRNA hydrolase (195 aa).

Residue tyrosine 17 coordinates tRNA. Catalysis depends on histidine 22, which acts as the Proton acceptor. Residues phenylalanine 68, asparagine 70, and asparagine 116 each contribute to the tRNA site.

The protein belongs to the PTH family. As to quaternary structure, monomer.

It is found in the cytoplasm. The enzyme catalyses an N-acyl-L-alpha-aminoacyl-tRNA + H2O = an N-acyl-L-amino acid + a tRNA + H(+). Its function is as follows. Hydrolyzes ribosome-free peptidyl-tRNAs (with 1 or more amino acids incorporated), which drop off the ribosome during protein synthesis, or as a result of ribosome stalling. In terms of biological role, catalyzes the release of premature peptidyl moieties from peptidyl-tRNA molecules trapped in stalled 50S ribosomal subunits, and thus maintains levels of free tRNAs and 50S ribosomes. The protein is Peptidyl-tRNA hydrolase of Shewanella loihica (strain ATCC BAA-1088 / PV-4).